Here is a 580-residue protein sequence, read N- to C-terminus: MEGGIIHGGADESAFKECFSLTWKNPYVLRLAFSAGIGGLLFGYDTGVISGALLYIRDDFKSVDRNTWLQEMIVSMAVAGAIVGAAIGGWANDKLGRRSAILMADFLFLLGAIIMAAAPNPSLLVVGRVFVGLGVGMASMTAPLYISEASPAKIRGALVSTNGFLITGGQFLSYLINLAFTDVTGTWRWMLGIAGIPALLQFVLMFTLPESPRWLYRKGREEEAKAILRRIYSAEDVEQEIRALKDSVETEILEEGSSEKINMIKLCKAKTVRRGLIAGVGLQVFQQFVGINTVMYYSPTIVQLAGFASNRTALLLSLVTAGLNAFGSIISIYFIDRIGRKKLLIISLFGVIISLGILTGVFYEAATHAPAISSLETQRFNNISCPDYKSAMNTNAWDCMTCLKASSPSCGYCSSPIGKEHPGACWISDDSVKDLCHNENRLWYTRGCPSNFGWFALLGLGLYIIFFSPGMGTVPWIVNSEIYPLRFRGICGGIAATANWISNLIVAQSFLSLTEAIGTSWTFLIFGVISVIALLFVMVCVPETKGMPMEEIEKMLERRSMEFKFWKKKSKLVEKQNQSA.

12 helical membrane passes run 36-56, 71-91, 106-126, 129-149, 156-176, 189-209, 275-295, 315-335, 343-363, 452-472, 490-510, and 521-541; these read GIGG…LLYI, EMIV…GGWA, FLFL…LLVV, VFVG…ISEA, GALV…SYLI, WMLG…FTLP, GLIA…NTVM, LLSL…IYFI, LLII…GVFY, FGWF…PGMG, ICGG…AQSF, and WTFL…MVCV.

It belongs to the major facilitator superfamily. Sugar transporter (TC 2.A.1.1) family. In terms of tissue distribution, expressed in the tapetum, but not in pollen grains. Detected in leaf vascular tissue and in roots.

It is found in the cell membrane. Its activity is regulated as follows. Inhibited by nickel and to a lesser extent by cobalt. In terms of biological role, plasma membrane inositol-proton symporter. Specific for several inositol epimers, such as myoinositol and scylloinositol. D-chiroinositol, mucoinositol, alloinositol and pinitol are also transported with a lower activity. Not active with galactinol and phytate. This is Probable inositol transporter 2 (INT2) from Arabidopsis thaliana (Mouse-ear cress).